A 426-amino-acid chain; its full sequence is UDP-N-acetylglucosamine 1-carboxyvinyltransferase (426 aa).

22–23 contributes to the phosphoenolpyruvate binding site; that stretch reads KN. Arginine 93 is a UDP-N-acetyl-alpha-D-glucosamine binding site. Aspartate 117 acts as the Proton donor in catalysis. The UDP-N-acetyl-alpha-D-glucosamine site is built by aspartate 312 and methionine 334.

The protein belongs to the EPSP synthase family. MurA subfamily.

The protein localises to the cytoplasm. It carries out the reaction phosphoenolpyruvate + UDP-N-acetyl-alpha-D-glucosamine = UDP-N-acetyl-3-O-(1-carboxyvinyl)-alpha-D-glucosamine + phosphate. It functions in the pathway cell wall biogenesis; peptidoglycan biosynthesis. Cell wall formation. Adds enolpyruvyl to UDP-N-acetylglucosamine. In Treponema denticola (strain ATCC 35405 / DSM 14222 / CIP 103919 / JCM 8153 / KCTC 15104), this protein is UDP-N-acetylglucosamine 1-carboxyvinyltransferase.